We begin with the raw amino-acid sequence, 450 residues long: Probable glucoamylase (450 aa).

An N-terminal signal peptide occupies residues 1–16 (MRTYWLFLLLGGVVSA). Residues 17–28 (ESLLSPNKRSKE) constitute a propeptide that is removed on maturation. W147 provides a ligand contact to substrate. D203 serves as the catalytic Proton acceptor. E206 acts as the Proton donor in catalysis. 2 N-linked (GlcNAc...) asparagine glycosylation sites follow: N383 and N409.

Belongs to the glycosyl hydrolase 15 family.

The catalysed reaction is Hydrolysis of terminal (1-&gt;4)-linked alpha-D-glucose residues successively from non-reducing ends of the chains with release of beta-D-glucose.. The chain is Probable glucoamylase (meu17) from Schizosaccharomyces pombe (strain 972 / ATCC 24843) (Fission yeast).